The following is a 1123-amino-acid chain: Alpha-mannosidase E (1123 aa).

A signal peptide spans 1–21 (MNKTKLIKIIFVIGVWILLST). Asn2 and Asn38 each carry an N-linked (GlcNAc...) asparagine glycan. The Extracellular portion of the chain corresponds to 22 to 1072 (FIINIYNENF…KYNRPNHLAL (1051 aa)). The Zn(2+) site is built by His67 and Asp69. Asn140 carries an N-linked (GlcNAc...) asparagine glycan. Zn(2+)-binding residues include Asp150 and His409. Catalysis depends on Asp150, which acts as the Nucleophile. Asn521, Asn675, Asn858, Asn887, Asn975, and Asn990 each carry an N-linked (GlcNAc...) asparagine glycan. A helical membrane pass occupies residues 1073–1093 (ILSLSIGTPAGILIIVIALVV). Residues 1094–1123 (IYKKRKNRKTLTSSYSLLNLILKDRADSSP) are Cytoplasmic-facing.

Belongs to the glycosyl hydrolase 38 family. It depends on Zn(2+) as a cofactor.

It is found in the membrane. It carries out the reaction Hydrolysis of terminal, non-reducing alpha-D-mannose residues in alpha-D-mannosides.. This Dictyostelium discoideum (Social amoeba) protein is Alpha-mannosidase E (manE).